Reading from the N-terminus, the 438-residue chain is 23S rRNA (uracil(1939)-C(5))-methyltransferase RlmD (438 aa).

The TRAM domain maps to 11-69 (LQPESKHQQVLVEKLDHQGAGIAYLNKKPLFIDGTLPGEEVVTQLTESKSKFARGKLIK). Residues cysteine 82, cysteine 88, cysteine 91, and cysteine 169 each contribute to the [4Fe-4S] cluster site. Residues glutamine 272, phenylalanine 301, asparagine 306, glutamate 322, asparagine 349, and aspartate 370 each contribute to the S-adenosyl-L-methionine site. Cysteine 396 functions as the Nucleophile in the catalytic mechanism.

It belongs to the class I-like SAM-binding methyltransferase superfamily. RNA M5U methyltransferase family. RlmD subfamily.

The enzyme catalyses uridine(1939) in 23S rRNA + S-adenosyl-L-methionine = 5-methyluridine(1939) in 23S rRNA + S-adenosyl-L-homocysteine + H(+). In terms of biological role, catalyzes the formation of 5-methyl-uridine at position 1939 (m5U1939) in 23S rRNA. The protein is 23S rRNA (uracil(1939)-C(5))-methyltransferase RlmD of Vibrio vulnificus (strain CMCP6).